The primary structure comprises 445 residues: Retrovirus-related Pol polyprotein from type-1 retrotransposable element R2 (445 aa).

Positions 1–114 (QPSVFNLVKW…LSRDDSLAKA (114 aa)) constitute a Reverse transcriptase domain. Residues 115-445 (MLASAGPAAE…GATPRQLIEY (331 aa)) are nucleic acid-binding endonuclease. Basic residues predominate over residues 380 to 389 (GPRPAHHHQP). The disordered stretch occupies residues 380–445 (GPRPAHHHQP…GATPRQLIEY (66 aa)). Residues 396-405 (ATANTGTLQS) show a composition bias toward polar residues.

It catalyses the reaction DNA(n) + a 2'-deoxyribonucleoside 5'-triphosphate = DNA(n+1) + diphosphate. This Popillia japonica (Japanese beetle) protein is Retrovirus-related Pol polyprotein from type-1 retrotransposable element R2.